The following is a 380-amino-acid chain: L-prolyl-[peptidyl-carrier protein] dehydrogenase (380 aa).

Glu-243 serves as the catalytic Proton acceptor. FAD-binding residues include Arg-269 and Gln-280.

Belongs to the acyl-CoA dehydrogenase family. It depends on FAD as a cofactor.

It catalyses the reaction L-prolyl-[peptidyl-carrier protein] + 2 oxidized [electron-transfer flavoprotein] + H(+) = (1H-pyrrole-2-carbonyl)-[peptidyl-carrier protein] + 2 reduced [electron-transfer flavoprotein]. In terms of biological role, involved in the biosynthesis of pyoluteorin. Catalyzes the desaturation of the L-prolyl-[PltL] to yield 1H-pyrrole-2-carbonyl-[PltL]. This chain is L-prolyl-[peptidyl-carrier protein] dehydrogenase, found in Pseudomonas fluorescens (strain ATCC BAA-477 / NRRL B-23932 / Pf-5).